A 931-amino-acid polypeptide reads, in one-letter code: GPI ethanolamine phosphate transferase 1 (931 aa).

Position 1 (Met-1) is a topological domain, cytoplasmic. The helical transmembrane segment at Leu-2 to Ile-22 threads the bilayer. The Lumenal segment spans residues Tyr-23–Phe-442. Residues Asn-128, Asn-192, Asn-295, and Asn-350 are each glycosylated (N-linked (GlcNAc...) asparagine). The helical transmembrane segment at Leu-443–Ile-463 threads the bilayer. Topologically, residues Lys-464 to Pro-480 are cytoplasmic. Residues His-481 to Ile-501 form a helical membrane-spanning segment. Residue Gln-502 is a topological domain, lumenal. The chain crosses the membrane as a helical span at residues Ala-503 to Leu-523. Residues Arg-524 to His-543 lie on the Cytoplasmic side of the membrane. The helical transmembrane segment at Phe-544 to Tyr-564 threads the bilayer. Residue Arg-565 is a topological domain, lumenal. Residues Tyr-566–Thr-586 traverse the membrane as a helical segment. The Cytoplasmic portion of the chain corresponds to Arg-587 to Thr-591. A helical membrane pass occupies residues Phe-592–Gly-612. The Lumenal segment spans residues Arg-613–Ser-618. Asn-616 carries an N-linked (GlcNAc...) asparagine glycan. A helical transmembrane segment spans residues Leu-619–Gly-639. Topologically, residues Lys-640 to Glu-649 are cytoplasmic. The chain crosses the membrane as a helical span at residues Leu-650 to Thr-670. Over His-671–Gln-685 the chain is Lumenal. A helical transmembrane segment spans residues Ile-686–Leu-706. Residues Ser-707–Leu-723 are Cytoplasmic-facing. Residues Leu-724–Ile-744 form a helical membrane-spanning segment. Over Gln-745 to Arg-786 the chain is Lumenal. Residues Ala-787–Ile-807 form a helical membrane-spanning segment. Residues Asn-808–Pro-824 lie on the Cytoplasmic side of the membrane. The helical transmembrane segment at Phe-825–Ala-845 threads the bilayer. Residues Phe-846–Lys-858 are Lumenal-facing. A helical membrane pass occupies residues Gly-859 to Val-879. At Lys-880–His-894 the chain is on the cytoplasmic side. Residues Tyr-895–Leu-915 traverse the membrane as a helical segment. Residues Thr-916–Met-931 lie on the Lumenal side of the membrane.

Belongs to the PIGG/PIGN/PIGO family. PIGN subfamily.

The protein resides in the endoplasmic reticulum membrane. It participates in glycolipid biosynthesis; glycosylphosphatidylinositol-anchor biosynthesis. Its function is as follows. Ethanolamine phosphate transferase that catalyzes an ethanolamine phosphate (EtNP) transfer from phosphatidylethanolamine (PE) to the 2-OH position of the first alpha-1,4-linked mannose of the alpha-D-Man-(1-&gt;6)-alpha-D-Man-(1-&gt;4)-alpha-D-GlcN-(1-&gt;6)-(1-radyl,2-acyl-sn-glycero-3-phospho)-2-acyl-inositol (also termed H3) intermediate to generate an alpha-D-Man-(1-&gt;6)-2-PEtn-alpha-D-Man-(1-&gt;4)-alpha-D-GlcN-(1-&gt;6)-(1-radyl,2-acyl-sn-glycero-3-phospho)-2-acyl-inositol and participates in the eighth step of the glycosylphosphatidylinositol-anchor biosynthesis. May act as suppressor of replication stress and chromosome missegregation. The chain is GPI ethanolamine phosphate transferase 1 from Mus musculus (Mouse).